The chain runs to 868 residues: Probable inorganic carbon transporter subunit DabA (868 aa).

Residues Cys-392, Asp-394, His-574, and Cys-589 each coordinate Zn(2+).

This sequence belongs to the inorganic carbon transporter (TC 9.A.2) DabA family. In terms of assembly, forms a complex with DabB. Requires Zn(2+) as cofactor.

It localises to the cell membrane. Functionally, part of an energy-coupled inorganic carbon pump. The sequence is that of Probable inorganic carbon transporter subunit DabA from Bacillus cereus (strain G9842).